A 42-amino-acid polypeptide reads, in one-letter code: Photosystem I reaction center subunit IX (42 aa).

The helical transmembrane segment at 7–27 (YLSVAPVLATLWFGSLAGLLI) threads the bilayer.

Belongs to the PsaJ family.

It localises to the plastid. Its subcellular location is the chloroplast thylakoid membrane. Functionally, may help in the organization of the PsaE and PsaF subunits. The sequence is that of Photosystem I reaction center subunit IX from Chloranthus spicatus (Chulantree).